The following is a 503-amino-acid chain: MDFSIKACDWSKGSTNGFLTGKSDCIVIGVFESQTLSGAALEIDAATKGLLTRIIKAGDMDGKTGSTVFLHEVQGIGASRVLLVGLGKQDAFTQKVYGDAVRAAWRAILGTKVAQVTFTLVQAPVKERSSDWAVRAAILALRELTYKFTQMKSKPDTSTRALKRIVFSVDAADEKLAKVAVKQGVALANGMDLTKDLGNLPGNVCTPTYLGNTAKKLAKDWKLKVEVLGQKQIEALKMGSFLAVTQGSVEPPQFIVLQYQGGAAKAAPVVLVGKGITFDTGGISLKPGDSMDEMKYDMCGAGSVLGTLRAVAEMGLKLNVVGIIPTCENMPAGNATKPGDIVTSMKGLTIEVLNTDAEGRLILCDALTYAERFKPAAVIDIATLTGACIIALGHHNSGLFSKDDALAGELLDASKEASDPAWRLPLDDEYQDQLKSNFADIANIGGRPAGSVTAACFLSRFTEAYPWAHLDIAGTAWKSGAAKGATGRPVPLLAQFLIDRAAQ.

Mn(2+)-binding residues include Lys-274 and Asp-279. Lys-286 is a catalytic residue. Mn(2+)-binding residues include Asp-297, Asp-356, and Glu-358. Residue Arg-360 is part of the active site.

The protein belongs to the peptidase M17 family. Requires Mn(2+) as cofactor.

Its subcellular location is the cytoplasm. The catalysed reaction is Release of an N-terminal amino acid, Xaa-|-Yaa-, in which Xaa is preferably Leu, but may be other amino acids including Pro although not Arg or Lys, and Yaa may be Pro. Amino acid amides and methyl esters are also readily hydrolyzed, but rates on arylamides are exceedingly low.. It catalyses the reaction Release of an N-terminal amino acid, preferentially leucine, but not glutamic or aspartic acids.. In terms of biological role, presumably involved in the processing and regular turnover of intracellular proteins. Catalyzes the removal of unsubstituted N-terminal amino acids from various peptides. This chain is Probable cytosol aminopeptidase, found in Paraburkholderia phymatum (strain DSM 17167 / CIP 108236 / LMG 21445 / STM815) (Burkholderia phymatum).